Consider the following 150-residue polypeptide: Transmembrane protein 35B (150 aa).

The signal sequence occupies residues 1 to 21; sequence MSFRVGVLRVLLGVFFALTGA. 3 consecutive transmembrane segments (helical) span residues 62–82, 84–104, and 111–131; these read TAVGWLELLAGLLLVVGPPVL, EISNVLLILLMMGAVFTLVVL, and YVPAAVCLGLLLLLDSCHFLA.

It belongs to the DoxX family.

It localises to the membrane. The polypeptide is Transmembrane protein 35B (Mus musculus (Mouse)).